The sequence spans 76 residues: Protein TraJ (76 aa).

It is found in the cytoplasm. Functionally, this protein is essential for positively regulating the expression of transfer genes that are involved in the conjugal transfer of DNA between bacterial cells. The sequence is that of Protein TraJ (traJ) from Escherichia coli.